The chain runs to 130 residues: Phosphomevalonate dehydratase small subunit (130 aa).

Residue S62 is the Proton acceptor of the active site.

It belongs to the AcnX type II small subunit family. Heterodimer composed of a large subunit (PMDh-L) and a small subunit (PMDh-S).

The catalysed reaction is (R)-5-phosphomevalonate = (2E)-3-methyl-5-phosphooxypent-2-enoate + H2O. It functions in the pathway isoprenoid biosynthesis; isopentenyl diphosphate biosynthesis via mevalonate pathway. Functionally, component of a hydro-lyase that catalyzes the dehydration of mevalonate 5-phosphate (MVA5P) to form trans-anhydromevalonate 5-phosphate (tAHMP). Involved in the archaeal mevalonate (MVA) pathway, which provides fundamental precursors for isoprenoid biosynthesis, such as isopentenyl diphosphate (IPP) and dimethylallyl diphosphate (DMAPP). The sequence is that of Phosphomevalonate dehydratase small subunit from Thermococcus sibiricus (strain DSM 12597 / MM 739).